Consider the following 8799-residue polypeptide: Nesprin-1 (8799 aa).

Residues 1-289 are actin-binding; the sequence is MATSRASSRS…TQYPDIHGAG (289 aa). The Cytoplasmic segment spans residues 1-8748; that stretch reads MATSRASSRS…GRAFLFRILR (8748 aa). 2 consecutive Calponin-homology (CH) domains span residues 27–134 and 178–283; these read IVQK…LYFQ and GNAK…TQYP. 52 Spectrin repeats span residues 314–397, 398–502, 503–609, 610–703, 704–815, 816–923, 924–1024, 1025–1122, 1123–1246, 1247–1333, 1334–1442, 1443–1548, 1549–1651, 1652–1761, 1762–1877, 1878–1974, 1975–2079, 2080–2193, 2194–2301, 2302–2399, 2400–2511, 2512–2617, 2618–2729, 2730–2836, 2837–2960, 2961–3060, 3061–3169, 3170–3273, 3274–3385, 3386–3488, 3489–3591, 3592–3718, 3719–3812, 3813–3918, 3919–4026, 4027–4137, 4138–4233, 4234–4337, 4338–4449, 4450–4558, 4559–4667, 4668–4774, 4775–4880, 4881–4989, 4990–5097, 5098–5207, 5208–5316, 5317–5422, 5423–5520, 5521–5628, 5629–5745, and 5746–5851; these read RDDR…SRLF, DWHI…HLMK, MEFL…SMLE, EVIS…YARA, DEMD…QLTV, PLEE…KHVE, ANSR…HLKI, AVEK…LVDD, PDKW…SSLE, GLIS…ERRI, QVSL…MEMV, KSKW…ILGH, LSQQ…LEDL, LARW…LQSV, LAEH…SHAC, MSTL…ADAL, VALK…QGQC, CGLI…LRVS, LSIW…KDFT, AQRT…QTQA, RIQD…LQDC, VSEL…LRSC, QLAL…LESV, IDQW…VEDL, VKDH…FGQV, TQLE…QNKE, QILQ…LENL, KIQM…VSRL, DRII…LEGA, LSKW…LEKL, VRLH…RMQL, NNVV…YSDW, YGST…LEKG, LHLA…LEAK, VKDH…QRVY, RSLE…KSLK, AELW…REQD, LQRT…IQVS, VTNL…LNKA, LSEK…LEKS, LVSR…TQEA, ILAR…LEDT, TSVY…CESR, MVQS…LTEI, YSRC…LQRC, MVQW…LEDA, VDEW…GKLV, KQEL…EEGK, AMSQ…LSKL, NQAL…LQDA, AKDM…PKEA, and VVQY…PSAH. Positions 314 to 8666 form a coiled coil; sequence RDDRLILKET…DLEKLLDMSS (8353 aa). Residue lysine 377 is modified to Phosphoserine. A Phosphoserine modification is found at serine 732. The tract at residues 1288-1310 is disordered; sequence KKRDLQEQMEQAQQGGQAGPGQE. The residue at position 2268 (threonine 2268) is a Phosphothreonine. Serine 5655 carries the post-translational modification Phosphoserine. The segment at 5868–5894 is disordered; the sequence is PVTEESGEEGTNSEISSPPACRSPSPV. Spectrin repeat units follow at residues 5971 to 6080, 6081 to 6187, 6377 to 6488, 6489 to 6584, 6585 to 6694, 6695 to 6798, 6799 to 6905, 6906 to 7023, 7024 to 7131, 7132 to 7240, 7241 to 7353, 7354 to 7457, 7458 to 7561, 7562 to 7674, 7675 to 7786, 7787 to 7886, 7887 to 8000, 8001 to 8109, and 8110 to 8221; these read LERQ…LEEK, LSDQ…SLGE, RQSI…RLQQ, ILRF…RSSL, HQNL…LEMW, SHLD…TILK, HWTR…QEKL, HQLQ…LEGL, LESW…LTSA, LGQW…SKAL, LQLW…LQAG, VVDY…LQSF, LLQH…RGII, DSQI…LAFL, LKDW…NEWA, VFSE…LKET, LVAV…IEET, WRLW…LKHF, and ISQR…VRLP. 2 positions are modified to phosphoserine: aspartate 8225 and serine 8227. Residues 8237–8287 are disordered; it reads TALSDLRWQDPSADGMPSPQPSSNPSLSLPQPLRSERSGRDTPASVDSIPL. The span at 8257–8269 shows a compositional bias: low complexity; sequence PSSNPSLSLPQPL. Residue threonine 8278 is modified to Phosphothreonine. 3 positions are modified to phosphoserine: serine 8281, serine 8284, and serine 8308. 3 Spectrin repeats span residues 8332 to 8440, 8441 to 8550, and 8551 to 8668; these read SSLE…MKQN, LQKW…LQDA, and LMQC…SSSQ. Threonine 8363 is modified (phosphothreonine). Positions 8673-8735 are disordered; it reads SWSSADELDT…SDSSRSDPRP (63 aa). Polar residues-rich tracts occupy residues 8682–8698 and 8706–8718; these read TSGS…PNRQ and SLSQ…SSPK. Residues 8721-8735 are compositionally biased toward basic and acidic residues; that stretch reads STRDGSDSSRSDPRP. One can recognise a KASH domain in the interval 8740–8799; that stretch reads RAFLFRILRAALPFQLLLLLLIGLTCLVPMSEKDYSCALSNNFARSFHPMLRYTNGPPPL. The helical; Anchor for type IV membrane protein transmembrane segment at 8749-8769 threads the bilayer; that stretch reads AALPFQLLLLLLIGLTCLVPM. Residues 8770 to 8799 are Perinuclear space-facing; it reads SEKDYSCALSNNFARSFHPMLRYTNGPPPL.

The protein belongs to the nesprin family. As to quaternary structure, core component of LINC complexes which are composed of inner nuclear membrane SUN domain-containing proteins coupled to outer nuclear membrane KASH domain-containing nesprins. SUN and KASH domain-containing proteins seem to bind each other promiscuously; however, differentially expression of LINC complex constituents can give rise to specific assemblies. At least SUN1/2-containing core LINC complexes are proposed to be hexameric composed of three protomers of each KASH and SUN domain-containing protein. The SUN2:SYNE1/KASH1 LINC complex is a heterohexamer; the homotrimeric cloverleave-like conformation of the SUN domain is a prerequisite for LINC complex formation in which three separate SYNE1/KASH1 peptides bind at the interface of adjacent SUN domains. Self-associates. Interacts with SYNE3. Interacts with SUN3; proposed to form a spermatogenesis-specific LINC complex with SUN3 during sperm head formation. May interact with MUSK. Interacts with SPAG4/SUN4. Interacts with EMD and LMNA in vitro. Interacts with F-actin via its N-terminal domain. Interacts with DCTN1 and DYNC1I1/2; suggesting the association with the dynein-dynactin motor complex. Interacts (via KASH domain) with TMEM258. The disulfid bond with SUN1 or SUN2 is required for stability of the respective LINC complex under tensile forces. Expressed in C2F3 and CH310T1/2 cells, brain and skeletal muscle (at protein level).

The protein localises to the nucleus outer membrane. Its subcellular location is the nucleus. It localises to the nucleus envelope. It is found in the cytoplasm. The protein resides in the cytoskeleton. The protein localises to the myofibril. Its subcellular location is the sarcomere. Functionally, multi-isomeric modular protein which forms a linking network between organelles and the actin cytoskeleton to maintain the subcellular spatial organization. As a component of the LINC (LInker of Nucleoskeleton and Cytoskeleton) complex involved in the connection between the nuclear lamina and the cytoskeleton. The nucleocytoplasmic interactions established by the LINC complex play an important role in the transmission of mechanical forces across the nuclear envelope and in nuclear movement and positioning. May be involved in nucleus-centrosome attachment. During interkinetic nuclear migration (INM) at G2 phase and nuclear migration in neural progenitors its LINC complex association with SUN1/2 and probably association with cytoplasmic dynein-dynactin motor complexes functions to pull the nucleus toward the centrosome; SYNE1 and SYNE2 seem to act redundantly in cerebellum, midbrain, brain stem, and other brain regions except cerebral cortex and hippocampus. Required for centrosome migration to the apical cell surface during early ciliogenesis. May be involved in nuclear remodeling during sperm head formation in spermatogenesis; a probable SUN3:SYNE1/KASH1 LINC complex may tether spermatid nuclei to posterior cytoskeletal structures such as the manchette. This chain is Nesprin-1, found in Mus musculus (Mouse).